A 261-amino-acid polypeptide reads, in one-letter code: Ribosome biogenesis protein nsa2 (261 aa).

Basic and acidic residues-rich tracts occupy residues 1-36 (MPQN…HKQS) and 66-82 (KQHE…EKDP). Disordered regions lie at residues 1-44 (MPQN…NLRG) and 64-97 (AIKQ…SNPT). Positions 15 to 22 (GKRLDTEE) match the Nuclear localization signal motif.

Belongs to the eukaryotic ribosomal protein eS8 family. Ribosome biogenesis protein NSA2 subfamily. In terms of assembly, component of the pre-66S ribosomal particle. Interacts with nop7 and rrp1. Interacts with rsa4 (via WD repeats).

It is found in the nucleus. The protein resides in the nucleolus. Functionally, involved in the biogenesis of the 60S ribosomal subunit. May play a part in the quality control of pre-60S particles. This chain is Ribosome biogenesis protein nsa2 (rbg-52), found in Neurospora crassa (strain ATCC 24698 / 74-OR23-1A / CBS 708.71 / DSM 1257 / FGSC 987).